The chain runs to 1196 residues: DNA polymerase beta (1196 aa).

It belongs to the DNA polymerase type-B family.

It carries out the reaction DNA(n) + a 2'-deoxyribonucleoside 5'-triphosphate = DNA(n+1) + diphosphate. Its function is as follows. DNA-directed DNA polymerase involved in viral DNA replication. The chain is DNA polymerase beta from African swine fever virus (isolate Pig/Kenya/KEN-50/1950) (ASFV).